A 284-amino-acid polypeptide reads, in one-letter code: Undecaprenyl-diphosphatase (284 aa).

8 helical membrane passes run 7–27, 44–64, 90–110, 116–136, 167–187, 197–217, 229–249, and 259–279; these read IILGVIEGITEWLPISSTGHL, EMFDVVIQLGAILSVVVLYFH, LWLKVLIAALPAAIIGLPLND, FYHFVPVAFMLIIYGVAFIVI, VLSLLPGTSRSGATIVGALLV, FTFFLGIPVMFGASFIKILHF, FGVLLVACIVAFGVSMVAIKF, and FTFFGKYRIVLGIILLIYAMF.

Belongs to the UppP family.

Its subcellular location is the cell membrane. It catalyses the reaction di-trans,octa-cis-undecaprenyl diphosphate + H2O = di-trans,octa-cis-undecaprenyl phosphate + phosphate + H(+). Functionally, catalyzes the dephosphorylation of undecaprenyl diphosphate (UPP). Confers resistance to bacitracin. The protein is Undecaprenyl-diphosphatase of Lactococcus lactis subsp. lactis (strain IL1403) (Streptococcus lactis).